Consider the following 346-residue polypeptide: Dihydroorotate dehydrogenase (quinone) (346 aa).

FMN is bound by residues 62–66 and T86; that span reads AGMDK. K66 provides a ligand contact to substrate. Position 111 to 115 (111 to 115) interacts with substrate; the sequence is NRMGF. Residues N142 and N175 each coordinate FMN. N175 contributes to the substrate binding site. S178 functions as the Nucleophile in the catalytic mechanism. Position 180 (N180) interacts with substrate. FMN contacts are provided by K211 and V239. 240–241 provides a ligand contact to substrate; sequence NT. Residues G261, G289, and 310–311 contribute to the FMN site; that span reads YT.

This sequence belongs to the dihydroorotate dehydrogenase family. Type 2 subfamily. Monomer. It depends on FMN as a cofactor.

The protein resides in the cell membrane. The enzyme catalyses (S)-dihydroorotate + a quinone = orotate + a quinol. The protein operates within pyrimidine metabolism; UMP biosynthesis via de novo pathway; orotate from (S)-dihydroorotate (quinone route): step 1/1. Its function is as follows. Catalyzes the conversion of dihydroorotate to orotate with quinone as electron acceptor. The protein is Dihydroorotate dehydrogenase (quinone) of Thermus thermophilus (strain ATCC BAA-163 / DSM 7039 / HB27).